A 598-amino-acid polypeptide reads, in one-letter code: Aspartate--tRNA(Asp/Asn) ligase (598 aa).

Residue Glu172 participates in L-aspartate binding. Positions 196-199 (QLFK) are aspartate. Position 218 (Arg218) interacts with L-aspartate. Residues 218–220 (RDE) and Gln227 each bind ATP. Residue His454 participates in L-aspartate binding. Glu488 contacts ATP. Residue Arg495 coordinates L-aspartate. An ATP-binding site is contributed by 540-543 (GLDR).

It belongs to the class-II aminoacyl-tRNA synthetase family. Type 1 subfamily. As to quaternary structure, homodimer.

It is found in the cytoplasm. The enzyme catalyses tRNA(Asx) + L-aspartate + ATP = L-aspartyl-tRNA(Asx) + AMP + diphosphate. Functionally, aspartyl-tRNA synthetase with relaxed tRNA specificity since it is able to aspartylate not only its cognate tRNA(Asp) but also tRNA(Asn). Reaction proceeds in two steps: L-aspartate is first activated by ATP to form Asp-AMP and then transferred to the acceptor end of tRNA(Asp/Asn). This is Aspartate--tRNA(Asp/Asn) ligase from Leptothrix cholodnii (strain ATCC 51168 / LMG 8142 / SP-6) (Leptothrix discophora (strain SP-6)).